The sequence spans 618 residues: Proline--tRNA ligase (618 aa).

Belongs to the class-II aminoacyl-tRNA synthetase family. ProS type 1 subfamily. Homodimer.

It localises to the cytoplasm. The enzyme catalyses tRNA(Pro) + L-proline + ATP = L-prolyl-tRNA(Pro) + AMP + diphosphate. Its function is as follows. Catalyzes the attachment of proline to tRNA(Pro) in a two-step reaction: proline is first activated by ATP to form Pro-AMP and then transferred to the acceptor end of tRNA(Pro). As ProRS can inadvertently accommodate and process non-cognate amino acids such as alanine and cysteine, to avoid such errors it has two additional distinct editing activities against alanine. One activity is designated as 'pretransfer' editing and involves the tRNA(Pro)-independent hydrolysis of activated Ala-AMP. The other activity is designated 'posttransfer' editing and involves deacylation of mischarged Ala-tRNA(Pro). The misacylated Cys-tRNA(Pro) is not edited by ProRS. This chain is Proline--tRNA ligase, found in Streptococcus uberis (strain ATCC BAA-854 / 0140J).